Here is a 323-residue protein sequence, read N- to C-terminus: Putative ABC transporter substrate-binding lipoprotein YhfQ (323 aa).

The signal sequence occupies residues Met-1–Ala-19. Residue Cys-20 is the site of N-palmitoyl cysteine attachment. The S-diacylglycerol cysteine moiety is linked to residue Cys-20. A Fe/B12 periplasmic-binding domain is found at Arg-51–Lys-322.

It belongs to the bacterial solute-binding protein 8 family. In terms of assembly, interacts with FloT.

It localises to the cell membrane. The protein localises to the membrane raft. The chain is Putative ABC transporter substrate-binding lipoprotein YhfQ (yhfQ) from Bacillus subtilis (strain 168).